The following is a 246-amino-acid chain: Probable 2-phosphosulfolactate phosphatase (246 aa).

This sequence belongs to the ComB family. Mg(2+) serves as cofactor.

It catalyses the reaction (2R)-O-phospho-3-sulfolactate + H2O = (2R)-3-sulfolactate + phosphate. The polypeptide is Probable 2-phosphosulfolactate phosphatase (Nostoc punctiforme (strain ATCC 29133 / PCC 73102)).